The sequence spans 180 residues: Inner membrane-spanning protein YciB (180 aa).

The next 6 membrane-spanning stretches (helical) occupy residues 4 to 24, 25 to 45, 52 to 72, 76 to 96, 118 to 138, and 150 to 170; these read LLSE…GGGI, QHAT…CYVI, LSII…ISGN, IKIK…MSGI, ITLS…NEVV, and FKVF…LPLL.

The protein belongs to the YciB family.

Its subcellular location is the cell inner membrane. Plays a role in cell envelope biogenesis, maintenance of cell envelope integrity and membrane homeostasis. The protein is Inner membrane-spanning protein YciB of Rickettsia massiliae (strain Mtu5).